Here is a 253-residue protein sequence, read N- to C-terminus: DNA repair protein RecO (253 aa).

This sequence belongs to the RecO family.

In terms of biological role, involved in DNA repair and RecF pathway recombination. This is DNA repair protein RecO from Dehalococcoides mccartyi (strain ATCC BAA-2100 / JCM 16839 / KCTC 5957 / BAV1).